The sequence spans 222 residues: Protein SHI RELATED SEQUENCE 4 (222 aa).

Positions 72, 75, 83, 88, 92, and 99 each coordinate Zn(2+). Residues 72 to 99 (CQECGNQAKKGCTHGRCRTCCKSNGLHC) constitute a DNA-binding region (zn(2)-C6 fungal-type; degenerate). Residues 114 to 137 (RERQQQLQTPTSNPTGGSGRVGKY) form a disordered region. The segment covering 118 to 128 (QQLQTPTSNPT) has biased composition (polar residues). The Required for homo- and heterodimerization signature appears at 191–194 (IAGH).

It belongs to the SHI protein family. In terms of tissue distribution, expressed in cotyledon tips, leaf primordia, hydathodes, stipules, and lateral root primordia and weakly at the edges of petals and sepals.

Its subcellular location is the nucleus. Its function is as follows. Transcription activator that binds DNA on 5'-ACTCTAC-3' and promotes auxin homeostasis-regulating gene expression (e.g. YUC genes), as well as genes affecting stamen development, cell expansion and timing of flowering. Synergistically with other SHI-related proteins, regulates gynoecium, stamen and leaf development in a dose-dependent manner, controlling apical-basal patterning. Promotes style and stigma formation, and influences vascular development during gynoecium development. May also have a role in the formation and/or maintenance of the shoot apical meristem (SAM). This is Protein SHI RELATED SEQUENCE 4 (SRS4) from Arabidopsis thaliana (Mouse-ear cress).